Consider the following 1187-residue polypeptide: MAAVSSGAAAAAGIPNPNPNRERPQQQQQQQPASAALHPVAHRSAAAACRPPLARVGYYEMERTIGKGNFAVVKLATHMITKAKVAIKIVDKTQLDDENLKKIFREVQIMKMLRHPHIIRLYQVMETERMIYLVTEYASGGEIFDHLVAHGRMAEKDARRKFKQIVAAVYFCHCRSIVHRDLKAENLLLDHNLNIKIADFGFSNLFSRGQLLKTWCGSPPYAAPELFEGKEYDGPKVDIWSLGVVLYVLVCGALPFDGSTLQNLRARVLSGKFRIPFFMSTDCEYLIRHMLILEPSRRLSMEQICKNKWMRQGDPDPEFDRLIVECEQVKVERETELINEQVLMAMAEMGFDRERTLQSLHADSYDHYSATYSLLSDKLKRHKNLCVAPPTPRPLYPLQDQSNAVSMTVPQVQLINPENQIVETDGPMALDSDEGEEPSPEAMARYLSMRRHTVGVPDPRAEMQEDLQKLAPGFPRVAPQAPFPPLMPALAQMQLMPTPSLQPGQQLEYKEQSLLQPPTLQLLNGMGPLGRRASDGGANIQLHTQQLLKRPRGQSPLVTSPHPIPAVAPVDEEGSDAEPDPEAVQRSSYKDCNTLHLPMERFSPVRRFSDGAATIQAYKTQLENNSLIRQLKQECEQLQKMYAAPQDERLMEHTQQQHVLYQQEQQILHQQIQALSLGHGENQPSSHLTYQLQRLRIQPSSPPPTHPSNHLFRPANQSSPPPPGGGAGLMQTHGGPSAVQYQHGSALYQSPSDSPPPTSLPRMALANQQPSVPPGSARTLAQTLPQQQVTIQVQEVELGGGAQRQSFLATPCHRVLGKQLSADNAETHSRSLSRFHTSAYEQLTAQLLGESVMGSYNPYLQGASLKVPGLEGYGLSYGGPSALQQALLSPTPLEYRPPPQVTPTLQGLLSPRHSLTGHADPRLPPQELAALLKRHSRPAPPTAPPTIPQDYGEMLLLQQLGQAAESLDSAPPQATPTQHYHHLLQIRTPPECPAPSLPHSESMEEDEMPAYHEGLLAKAAAPCTEAHELLAPPLGSTPPYSSPTHRHAYLRSATATRESCADAADAGMESDHNGYGSRSTQSDSYRPRGALQRHHTIQTCDDAYEQVEPMSGMSLLAGKALSSARMSDILSQSSLTGSQQLQQREGPVCDVDADVHSSSCYPSSCTTDMLLSYKTPDLQYSVEQAGV.

Positions 1 to 15 (MAAVSSGAAAAAGIP) are enriched in low complexity. The interval 1–41 (MAAVSSGAAAAAGIPNPNPNRERPQQQQQQQPASAALHPVA) is disordered. One can recognise a Protein kinase domain in the interval 59–310 (YEMERTIGKG…MEQICKNKWM (252 aa)). ATP is bound by residues 65–73 (IGKGNFAVV) and Lys88. Catalysis depends on Asp181, which acts as the Proton acceptor. Position 214 is a phosphothreonine (Thr214). At Ser218 the chain carries Phosphoserine. Residues 337–377 (LINEQVLMAMAEMGFDRERTLQSLHADSYDHYSATYSLLSD) form the UBA domain. Disordered regions lie at residues 548 to 587 (LKRP…VQRS), 697 to 776 (IQPS…PPGS), and 1060 to 1092 (CADA…GALQ). Residues 570-581 (VDEEGSDAEPDP) are compositionally biased toward acidic residues. Over residues 739–749 (VQYQHGSALYQ) the composition is skewed to polar residues.

The protein belongs to the protein kinase superfamily. CAMK Ser/Thr protein kinase family. SNF1 subfamily. Requires Mg(2+) as cofactor.

The enzyme catalyses L-seryl-[protein] + ATP = O-phospho-L-seryl-[protein] + ADP + H(+). It carries out the reaction L-threonyl-[protein] + ATP = O-phospho-L-threonyl-[protein] + ADP + H(+). This chain is Serine/threonine-protein kinase SIK3 homolog, found in Danio rerio (Zebrafish).